Reading from the N-terminus, the 195-residue chain is Segregation and condensation protein B (195 aa).

The tract at residues 169-195 is disordered; that stretch reads LEDVAASQENSREAGGRGSIPGHPGEE.

This sequence belongs to the ScpB family. Homodimer. Homodimerization may be required to stabilize the binding of ScpA to the Smc head domains. Component of a cohesin-like complex composed of ScpA, ScpB and the Smc homodimer, in which ScpA and ScpB bind to the head domain of Smc. The presence of the three proteins is required for the association of the complex with DNA.

The protein resides in the cytoplasm. Participates in chromosomal partition during cell division. May act via the formation of a condensin-like complex containing Smc and ScpA that pull DNA away from mid-cell into both cell halves. The chain is Segregation and condensation protein B from Moorella thermoacetica (strain ATCC 39073 / JCM 9320).